A 458-amino-acid chain; its full sequence is Protein amnionless (458 aa).

Residues Met1–Ala19 form the signal peptide. The Extracellular portion of the chain corresponds to Ala20 to Ala366. Asn35 carries N-linked (GlcNAc...) asparagine glycosylation. Disulfide bonds link Cys43/Cys96, Cys137/Cys213, Cys205/Cys211, Cys223/Cys249, Cys234/Cys250, and Cys239/Cys253. The segment at Ser67–Ala87 is interaction with CUBN. The VWFC domain maps to Gly203–Gly254. Residues Gly367–Leu387 form a helical membrane-spanning segment. At Arg388 to Ala458 the chain is on the cytoplasmic side. The tract at residues Ser422 to Ser446 is disordered.

As to quaternary structure, interacts (via extracellular region) with CUBN/cubilin. This gives rise to a huge complex containing one AMN chain and three CUBN chains. In terms of processing, N-glycosylated. A soluble form arises by proteolytic removal of the membrane anchor. In terms of tissue distribution, detected in kidney (at protein level). Detected in kidney and ileum.

It localises to the apical cell membrane. The protein localises to the cell membrane. Its subcellular location is the endosome membrane. It is found in the membrane. The protein resides in the coated pit. It localises to the secreted. Its function is as follows. Membrane-bound component of the endocytic receptor formed by AMN and CUBN. Required for normal CUBN glycosylation and trafficking to the cell surface. The complex formed by AMN and CUBN is required for efficient absorption of vitamin B12. Required for normal CUBN-mediated protein transport in the kidney. The polypeptide is Protein amnionless (AMN) (Canis lupus familiaris (Dog)).